The chain runs to 43 residues: METATLIAIFISGLLVSFTGYALYTAFGQPSQQLRDPFEEHGD.

A helical transmembrane segment spans residues 7 to 27 (IAIFISGLLVSFTGYALYTAF).

This sequence belongs to the PsbN family.

Its subcellular location is the plastid. It localises to the chloroplast thylakoid membrane. May play a role in photosystem I and II biogenesis. The polypeptide is Protein PsbN (Suaeda maritima (Annual sea blite)).